A 345-amino-acid polypeptide reads, in one-letter code: NADH-quinone oxidoreductase subunit H (345 aa).

The next 8 membrane-spanning stretches (helical) occupy residues 13–33, 84–104, 115–135, 161–181, 190–210, 248–268, 277–297, and 309–329; these read VLIL…LLFL, FMLA…VIPF, VAIL…IMGG, LGLI…GGIV, FFSW…ISCL, YIAI…GWLS, VFWM…VKAI, and LGWK…AFAA.

The protein belongs to the complex I subunit 1 family. NDH-1 is composed of 14 different subunits. Subunits NuoA, H, J, K, L, M, N constitute the membrane sector of the complex.

It is found in the cell inner membrane. The catalysed reaction is a quinone + NADH + 5 H(+)(in) = a quinol + NAD(+) + 4 H(+)(out). NDH-1 shuttles electrons from NADH, via FMN and iron-sulfur (Fe-S) centers, to quinones in the respiratory chain. The immediate electron acceptor for the enzyme in this species is believed to be ubiquinone. Couples the redox reaction to proton translocation (for every two electrons transferred, four hydrogen ions are translocated across the cytoplasmic membrane), and thus conserves the redox energy in a proton gradient. This subunit may bind ubiquinone. The sequence is that of NADH-quinone oxidoreductase subunit H from Roseobacter denitrificans (strain ATCC 33942 / OCh 114) (Erythrobacter sp. (strain OCh 114)).